The sequence spans 398 residues: uncharacterized protein (398 aa).

Belongs to the glycosyltransferase 2 family.

This is an uncharacterized protein from Escherichia coli (strain K12).